Reading from the N-terminus, the 549-residue chain is Glucose-6-phosphate isomerase (549 aa).

Residue glutamate 353 is the Proton donor of the active site. Residues histidine 384 and lysine 513 contribute to the active site.

It belongs to the GPI family.

Its subcellular location is the cytoplasm. It catalyses the reaction alpha-D-glucose 6-phosphate = beta-D-fructose 6-phosphate. The protein operates within carbohydrate biosynthesis; gluconeogenesis. It functions in the pathway carbohydrate degradation; glycolysis; D-glyceraldehyde 3-phosphate and glycerone phosphate from D-glucose: step 2/4. Catalyzes the reversible isomerization of glucose-6-phosphate to fructose-6-phosphate. The polypeptide is Glucose-6-phosphate isomerase (Brucella suis (strain ATCC 23445 / NCTC 10510)).